We begin with the raw amino-acid sequence, 621 residues long: Autonomous transposable element EN-1 mosaic protein (621 aa).

Disordered stretches follow at residues 1 to 119, 428 to 447, 498 to 530, and 549 to 621; these read MFRM…PPRR, YTRRSNFSAGSNRPRRPSAR, QQPPIITHPVSGQSSDRSTAAADGSQGSATSVQ, and RQPG…PPTE. Composition is skewed to polar residues over residues 27–39 and 47–61; these read EGTTTSRSRQEQL and RGSSGPSNTEGTTSR. Over residues 82 to 102 the composition is skewed to acidic residues; that stretch reads AAVDAEAEEAAAELDDGEETS. Low complexity predominate over residues 570-594; that stretch reads PPRGQSQSPGLPSHSPGSGSGSHHA.

This protein has most probably three functions; the mutator (M) function, for excision and transposition; the suppressor (S) function, which inhibits residual gene activity of certain alleles in which inhibitor elements are integrated; an activator (A) function is proposed, because inactive SPM can be activated by a second SPM. In Zea mays (Maize), this protein is Autonomous transposable element EN-1 mosaic protein.